The following is a 388-amino-acid chain: Na(+)/H(+) antiporter NhaA (388 aa).

Topologically, residues 1-11 are cytoplasmic; the sequence is MKHLHRFFSSD. A helical membrane pass occupies residues 12–31; the sequence is ASGGIILIIAAILAMMMANS. The Periplasmic segment spans residues 32–58; the sequence is GATSGWYHDFLETPVQLRVGSLEINKN. A helical membrane pass occupies residues 59-80; sequence MLLWINDALMAVFFLLVGLEVK. At 81–96 the chain is on the cytoplasmic side; that stretch reads RELMQGSLASLRQAAF. A helical membrane pass occupies residues 97-116; it reads PVIAAIGGMIVPALLYLAFN. At 117–122 the chain is on the periplasmic side; that stretch reads YADPIT. A helical transmembrane segment spans residues 123 to 130; sequence REGWAIPA. Residues 131–154 lie on the Cytoplasmic side of the membrane; that stretch reads ATDIAFALGVLALLGSRVPLALKI. A helical transmembrane segment spans residues 155–176; the sequence is FLMALAIIDDLGAIIIIALFYT. The Periplasmic segment spans residues 177 to 180; the sequence is NDLS. The chain crosses the membrane as a helical span at residues 181–200; sequence MASLGVAAVAIAVLAVLNLC. Over 201 to 204 the chain is Cytoplasmic; that stretch reads GVRR. Residues 205-222 form a helical membrane-spanning segment; that stretch reads TGVYILVGVVLWTAVLKS. Residue glycine 223 is a topological domain, periplasmic. Residues 224-236 form a helical membrane-spanning segment; the sequence is VHATLAGVIVGFF. Over 237 to 253 the chain is Cytoplasmic; that stretch reads IPLKEKHGRSTAKRLEH. A helical transmembrane segment spans residues 254-272; sequence VLHPWVAYLILPLFAFANA. The Periplasmic segment spans residues 273–286; the sequence is GVSLQGVTLDGLTS. A helical membrane pass occupies residues 287 to 310; it reads ILPLGIIAGLLIGKPLGISLFCWL. Over 311–339 the chain is Cytoplasmic; that stretch reads ALRLKLAHLPEGTTYQQIMAVGILCGIGF. A helical transmembrane segment spans residues 340–350; that stretch reads TMSIFIASLAF. Residues 351 to 357 lie on the Periplasmic side of the membrane; the sequence is GSVDPEL. Residues 358 to 380 traverse the membrane as a helical segment; it reads INWAKLGILVGSISSAVIGYSWL. Topologically, residues 381-388 are cytoplasmic; the sequence is RVRLRPSV.

This sequence belongs to the NhaA Na(+)/H(+) (TC 2.A.33) antiporter family.

Its subcellular location is the cell inner membrane. It catalyses the reaction Na(+)(in) + 2 H(+)(out) = Na(+)(out) + 2 H(+)(in). Na(+)/H(+) antiporter that extrudes sodium in exchange for external protons. This chain is Na(+)/H(+) antiporter NhaA, found in Shigella dysenteriae serotype 1 (strain Sd197).